The following is a 340-amino-acid chain: Ketol-acid reductoisomerase (NADP(+)) (340 aa).

The region spanning 1–182 is the KARI N-terminal Rossmann domain; it reads MTVTMQYEKD…GSARVGLLET (182 aa). NADP(+) is bound by residues 26–29, Arg49, Ser53, and 83–86; these read YGSQ and DEIQ. His108 is a catalytic residue. Gly134 serves as a coordination point for NADP(+). The 146-residue stretch at 183–328 folds into the KARI C-terminal knotted domain; that stretch reads TFKEETEEDL…AELRKAMPFV (146 aa). Residues Asp191, Glu195, Glu227, and Glu231 each contribute to the Mg(2+) site. Residue Ser252 participates in substrate binding.

It belongs to the ketol-acid reductoisomerase family. Mg(2+) is required as a cofactor.

The enzyme catalyses (2R)-2,3-dihydroxy-3-methylbutanoate + NADP(+) = (2S)-2-acetolactate + NADPH + H(+). It catalyses the reaction (2R,3R)-2,3-dihydroxy-3-methylpentanoate + NADP(+) = (S)-2-ethyl-2-hydroxy-3-oxobutanoate + NADPH + H(+). Its pathway is amino-acid biosynthesis; L-isoleucine biosynthesis; L-isoleucine from 2-oxobutanoate: step 2/4. The protein operates within amino-acid biosynthesis; L-valine biosynthesis; L-valine from pyruvate: step 2/4. Functionally, involved in the biosynthesis of branched-chain amino acids (BCAA). Catalyzes an alkyl-migration followed by a ketol-acid reduction of (S)-2-acetolactate (S2AL) to yield (R)-2,3-dihydroxy-isovalerate. In the isomerase reaction, S2AL is rearranged via a Mg-dependent methyl migration to produce 3-hydroxy-3-methyl-2-ketobutyrate (HMKB). In the reductase reaction, this 2-ketoacid undergoes a metal-dependent reduction by NADPH to yield (R)-2,3-dihydroxy-isovalerate. The sequence is that of Ketol-acid reductoisomerase (NADP(+)) from Streptococcus suis (strain 98HAH33).